The chain runs to 361 residues: Zygote arrest protein 1 (361 aa).

Disordered regions lie at residues 1 to 23 (MFPA…AGDG), 98 to 128 (QPAG…PRSW), and 148 to 252 (VAGG…EQDK). The residue at position 154 (threonine 154) is a Phosphothreonine; by CDK1. Position 161 is a phosphoserine; by CDK1 (serine 161). Basic and acidic residues predominate over residues 168–177 (REPEPREVAA). The segment at 263 to 346 (KYGYYHCKDC…RQDLCGRCKD (84 aa)) adopts a 3CxxC-type zinc-finger fold.

This sequence belongs to the ZAR1 family. As to quaternary structure, interacts with YBX2. Post-translationally, phosphorylation by CDK1 does not regulate formation of MARDO (mitochondria-associated ribonucleoprotein domain) membraneless compartment. In terms of processing, ubiquitinated and degradaded by the proteasome during oocyte meiotic maturation, leading to MARDO (mitochondria-associated ribonucleoprotein domain) membraneless compartment dissolution. In terms of tissue distribution, ovary. Expressed in primary oocytes (from primary through antral follicle stages) and during the progression from Meiosis I to Meiosis II. The mRNA is detected in growing oocytes (early primary follicle, type 3a) through fully grown oocytes (antral follicle, type 8).

The protein resides in the cytoplasm. It localises to the cytoplasmic ribonucleoprotein granule. Its function is as follows. mRNA-binding protein that mediates formation of MARDO (mitochondria-associated ribonucleoprotein domain), a membraneless compartment that stores maternal mRNAs in oocytes. MARDO assembly around mitochondria is directed by an increase in mitochondrial membrane potential during oocyte growth. Promotes formation of MARDO phase-separated membraneless compartment by undergoing liquid-liquid phase separation upon binding to maternal mRNAs. Binds to the 3'-UTR of maternal mRNAs. Maternal mRNAs stored in the MARDO are translationally repressed. Essential for female fertility and oocyte-to-embryo transition by coordinating maternal mRNA storage, translation and degradation. This Mus musculus (Mouse) protein is Zygote arrest protein 1.